Reading from the N-terminus, the 201-residue chain is Ran-specific GTPase-activating protein (201 aa).

A compositionally biased stretch (basic and acidic residues) spans Met-1–Gln-26. A disordered region spans residues Met-1–Glu-35. Residue Ala-2 is modified to N-acetylalanine. 2 positions are modified to phosphothreonine: Thr-13 and Thr-18. A phosphoserine mark is found at Ser-21 and Ser-60. One can recognise a RanBD1 domain in the interval Gln-26–Glu-164. N6-acetyllysine; alternate is present on Lys-150. Lys-150 carries the post-translational modification N6-succinyllysine; alternate. Residues Glu-163 to Gln-201 form a disordered region. An N6-acetyllysine modification is found at Lys-183. The residue at position 188 (Ser-188) is a Phosphoserine. Residue Lys-190 forms a Glycyl lysine isopeptide (Lys-Gly) (interchain with G-Cter in SUMO2) linkage.

It belongs to the RANBP1 family. In terms of assembly, interacts with RAN (via C-terminus of GTP-bound form) but not with GDP-bound RAN. Identified in a complex composed of RAN, RANGAP1 and RANBP1. Identified in a complex that contains TNPO1, RAN and RANBP1. Identified in a complex that contains CSE1L, KPNA2, RAN and RANBP1. Identified in a complex with nucleotide-free RAN and RCC1.

Its function is as follows. Plays a role in RAN-dependent nucleocytoplasmic transport. Alleviates the TNPO1-dependent inhibition of RAN GTPase activity and mediates the dissociation of RAN from proteins involved in transport into the nucleus. Induces a conformation change in the complex formed by XPO1 and RAN that triggers the release of the nuclear export signal of cargo proteins. Promotes the disassembly of the complex formed by RAN and importin beta. Promotes dissociation of RAN from a complex with KPNA2 and CSE1L. Required for normal mitotic spindle assembly and normal progress through mitosis via its effect on RAN. Does not increase the RAN GTPase activity by itself, but increases GTP hydrolysis mediated by RANGAP1. Inhibits RCC1-dependent exchange of RAN-bound GDP by GTP. In Homo sapiens (Human), this protein is Ran-specific GTPase-activating protein (RANBP1).